The sequence spans 450 residues: Phosphoglucosamine mutase (450 aa).

Residue Ser-101 is the Phosphoserine intermediate of the active site. Ser-101, Asp-242, Asp-244, and Asp-246 together coordinate Mg(2+). Ser-101 is subject to Phosphoserine.

Belongs to the phosphohexose mutase family. The cofactor is Mg(2+). Post-translationally, activated by phosphorylation.

It carries out the reaction alpha-D-glucosamine 1-phosphate = D-glucosamine 6-phosphate. Catalyzes the conversion of glucosamine-6-phosphate to glucosamine-1-phosphate. The polypeptide is Phosphoglucosamine mutase (Rhodopseudomonas palustris (strain BisA53)).